The chain runs to 263 residues: Methylesterase 18 (263 aa).

Serine 80 functions as the Acyl-ester intermediate in the catalytic mechanism. Active-site charge relay system residues include aspartate 212 and histidine 240.

Belongs to the AB hydrolase superfamily. Methylesterase family.

It catalyses the reaction methyl (indol-3-yl)acetate + H2O = (indol-3-yl)acetate + methanol + H(+). The protein operates within plant hormone biosynthesis. Its function is as follows. Methylesterase shown to have methyl indole-3-acetic acid (MeIAA) esterase activity in vitro. In Arabidopsis thaliana (Mouse-ear cress), this protein is Methylesterase 18.